We begin with the raw amino-acid sequence, 493 residues long: Putative lon protease homolog (493 aa).

52–59 lines the ATP pocket; the sequence is GPPGVGKS.

This sequence belongs to the peptidase S16 family.

This is Putative lon protease homolog from Thermoplasma acidophilum (strain ATCC 25905 / DSM 1728 / JCM 9062 / NBRC 15155 / AMRC-C165).